The sequence spans 72 residues: Probable neurotoxin pcD-993 (72 aa).

The first 19 residues, 1 to 19 (MNYLVMISFALLLVIGVES), serve as a signal peptide directing secretion. In terms of domain architecture, LCN-type CS-alpha/beta spans 21–72 (RDGYFVEPDNCVVHCMPSSEMCDRGCKHNGATSGSCKAFSKGGNACWCKGLR). 3 cysteine pairs are disulfide-bonded: Cys-35-Cys-56, Cys-42-Cys-66, and Cys-46-Cys-68. Arg-72 is a propeptide (removed by a carboxypeptidase).

This sequence belongs to the long (3 C-C) scorpion toxin superfamily. As to expression, expressed by the venom gland.

It is found in the secreted. The chain is Probable neurotoxin pcD-993 from Androctonus australis (Sahara scorpion).